Consider the following 481-residue polypeptide: Rhamnogalacturonan I rhamnosyltransferase 4 (481 aa).

Residues 33 to 55 (VWFFRVCSCILVWTCLIQLFWHS) traverse the membrane as a helical; Signal-anchor for type II membrane protein segment. 2 N-linked (GlcNAc...) asparagine glycosylation sites follow: asparagine 85 and asparagine 118. A substrate-binding site is contributed by 258-260 (HLR). N-linked (GlcNAc...) asparagine glycans are attached at residues asparagine 372 and asparagine 432.

It belongs to the glycosyltransferase GT106 family.

It is found in the golgi apparatus membrane. The catalysed reaction is alpha-D-galacturonosyl-[(1-&gt;2)-alpha-L-rhamnosyl-(1-&gt;4)-alpha-D-galacturonosyl](n) + UDP-beta-L-rhamnose = [(1-&gt;2)-alpha-L-rhamnosyl-(1-&gt;4)-alpha-D-galacturonosyl](n+1) + UDP + H(+). It participates in glycan metabolism; pectin biosynthesis. In terms of biological role, glycosyltransferase involved in the formation of rhamnogalacturonan I (RG-I) oligosaccharides in the seed coat mucilage, which is a specialized cell wall with abundant RG-I. Transfers the rhamnose residue from UDP-beta-L-rhamnose to RG-I oligosaccharides. The chain is Rhamnogalacturonan I rhamnosyltransferase 4 from Arabidopsis thaliana (Mouse-ear cress).